The sequence spans 276 residues: Large ribosomal subunit protein uL2 (276 aa).

Residues 226 to 276 (MNSVDHPHGGGEGKTSGGRHPVSPWGTPTKGYKTRSNKRTDKLILRHRNKG) are disordered.

It belongs to the universal ribosomal protein uL2 family. As to quaternary structure, part of the 50S ribosomal subunit. Forms a bridge to the 30S subunit in the 70S ribosome.

One of the primary rRNA binding proteins. Required for association of the 30S and 50S subunits to form the 70S ribosome, for tRNA binding and peptide bond formation. It has been suggested to have peptidyltransferase activity; this is somewhat controversial. Makes several contacts with the 16S rRNA in the 70S ribosome. The protein is Large ribosomal subunit protein uL2 of Vesicomyosocius okutanii subsp. Calyptogena okutanii (strain HA).